We begin with the raw amino-acid sequence, 334 residues long: Ornithine carbamoyltransferase (334 aa).

Carbamoyl phosphate-binding positions include 56–59 (STRT), Gln83, Arg107, and 134–137 (HPTQ). Residues Asn168, Asp232, and 236 to 237 (SM) contribute to the L-ornithine site. Carbamoyl phosphate is bound by residues 274 to 275 (CL) and Arg320.

Belongs to the aspartate/ornithine carbamoyltransferase superfamily. OTCase family.

The protein localises to the cytoplasm. The catalysed reaction is carbamoyl phosphate + L-ornithine = L-citrulline + phosphate + H(+). The protein operates within amino-acid biosynthesis; L-arginine biosynthesis; L-arginine from L-ornithine and carbamoyl phosphate: step 1/3. Reversibly catalyzes the transfer of the carbamoyl group from carbamoyl phosphate (CP) to the N(epsilon) atom of ornithine (ORN) to produce L-citrulline. This chain is Ornithine carbamoyltransferase, found in Shigella boydii serotype 4 (strain Sb227).